The primary structure comprises 263 residues: Small ribosomal subunit protein uS2m (263 aa).

A mitochondrion-targeting transit peptide spans 1 to 15 (MLSRKLSPEQLVARR).

It belongs to the universal ribosomal protein uS2 family. As to quaternary structure, component of the mitochondrial small ribosomal subunit (mt-SSU). Mature yeast 74S mitochondrial ribosomes consist of a small (37S) and a large (54S) subunit. The 37S small subunit contains a 15S ribosomal RNA (15S mt-rRNA) and at least 32 different proteins. The 54S large subunit contains a 21S rRNA (21S mt-rRNA) and at least 45 different proteins.

The protein resides in the mitochondrion. Functionally, component of the mitochondrial ribosome (mitoribosome), a dedicated translation machinery responsible for the synthesis of mitochondrial genome-encoded proteins, including at least some of the essential transmembrane subunits of the mitochondrial respiratory chain. The mitoribosomes are attached to the mitochondrial inner membrane and translation products are cotranslationally integrated into the membrane. The polypeptide is Small ribosomal subunit protein uS2m (Schizosaccharomyces pombe (strain 972 / ATCC 24843) (Fission yeast)).